Reading from the N-terminus, the 90-residue chain is Small ribosomal subunit protein bS20 (90 aa).

Belongs to the bacterial ribosomal protein bS20 family.

In terms of biological role, binds directly to 16S ribosomal RNA. This is Small ribosomal subunit protein bS20 from Francisella tularensis subsp. holarctica (strain FTNF002-00 / FTA).